The primary structure comprises 660 residues: Polyadenylation factor subunit 2 (660 aa).

The span at 1-12 (MSYEPRGDHDKG) shows a compositional bias: basic and acidic residues. The segment at 1–32 (MSYEPRGDHDKGYGGGGGHDGLPPRNRGRRPV) is disordered. 7 WD repeats span residues 94 to 133 (KIKHPINVVRWTPEGRRLLTASSSGEFTLWNGTGFNFETI), 136 to 176 (AHDS…ESIR), 177 to 216 (GHTDPIRDLAFSPNDTKFVTASDDQTLKVFDFAGGSTDMT), 219 to 258 (GHGWDAKSCDWHPSRGLIVSGSKDHLVKLWDPRTGRCLTT), 261 to 301 (GHKN…DIAL), 304 to 344 (GHEK…TAPD), and 376 to 415 (AHDFAIWSLDWHPLGHILASGSNDRITRFWSRARPGEAPE). Residues 562 to 660 (KAGYQPPPPP…QSKGNYTRVR (99 aa)) are disordered. The segment covering 566–610 (QPPPPPGSAGAPMPPPGILPPGLIPPPGAAGFPMPPPGFAPPPLI) has biased composition (pro residues).

The protein localises to the nucleus. In terms of biological role, required for 3'-end cleavage and polyadenylation of pre-mRNAs. Also involved in chromosome segregation where it has a role in chromosome attachment to the mitotic spindle. This is Polyadenylation factor subunit 2 (paa-1) from Neurospora crassa (strain ATCC 24698 / 74-OR23-1A / CBS 708.71 / DSM 1257 / FGSC 987).